Here is a 1234-residue protein sequence, read N- to C-terminus: Coiled-coil domain-containing protein CG32809 (1234 aa).

The span at 1-11 (MLIRWKSKDKS) shows a compositional bias: basic and acidic residues. Disordered regions lie at residues 1–88 (MLIR…HAHQ), 107–129 (KNKK…FDDD), and 330–350 (KVSM…NYEE). Residues 12 to 25 (ASSNQSVGGSSSSS) are compositionally biased toward low complexity. Positions 55–69 (GDERRRAMRRDDPRR) are enriched in basic and acidic residues. Residues 412–436 (HRIRVEHMERQLANLTGLVQKALVN) adopt a coiled-coil conformation. Residues 498–548 (DIQGIPKSHNPLHAAETKPTKPAIKSSTLPRTSSQERDRLKPPPPPKPIVL) are disordered. Coiled-coil stretches lie at residues 565–594 (EVYN…SQAQ) and 630–666 (TRIS…EVIN). Disordered stretches follow at residues 754–793 (EQRL…ALSG), 815–852 (IAQQ…DESA), 928–1011 (LHSY…PPNQ), and 1028–1070 (SANA…ESGN). Low complexity-rich tracts occupy residues 817–837 (QQQQ…QHQQ), 952–965 (TSSS…GSSS), 993–1004 (TSSRSPLASPTS), 1028–1039 (SANANANANSNA), and 1046–1068 (VGET…GNES). Positions 1077 to 1105 (VALEMRHQELLKKQKMLQEQYQRLQQMSK) form a coiled coil.

The protein is Coiled-coil domain-containing protein CG32809 of Drosophila melanogaster (Fruit fly).